Here is a 417-residue protein sequence, read N- to C-terminus: Hydroxysteroid dehydrogenase-like protein 2 (417 aa).

NADP(+)-binding positions include 17-23, K42, and D74; that span reads GASRGIG. The active-site Proton acceptor is Y168. K172 serves as a coordination point for NADP(+). The SCP2 domain maps to 306–414; sequence SSPLQETFKA…KLEKILGQMN (109 aa).

Belongs to the short-chain dehydrogenases/reductases (SDR) family.

It is found in the peroxisome. It localises to the mitochondrion. Functionally, has apparently no steroid dehydrogenase activity. Might act as a metabolic regulator that affects systemic adaptation to nutritional cues. This is Hydroxysteroid dehydrogenase-like protein 2 (hsdl2) from Xenopus tropicalis (Western clawed frog).